Consider the following 273-residue polypeptide: MSTIRPVFYVSDGTGITAETIGHSLLTQFSGFNFVTDRMSFIDDADKARDAALRARAAGERYQVRPVVVNSCVDPQLSMILAESGALMLDVFAPFIEPLERELNAPRHSRVGRAHGMVDFETYHRRINAMNFALSHDDGIALNYDEADVILVAVSRAGKTPTCIYLALHYGIRAANYPLTEEDLESERLPPRLRNYRSKLFGLTIDPERLQQIRQERRANSRYSAAETCRREVATAERMFQMERIPTLSTTNTSIEEISSKVLSTLGLQREMF.

153–160 (AVSRAGKT) contributes to the ADP binding site.

The protein belongs to the pyruvate, phosphate/water dikinase regulatory protein family. PSRP subfamily.

It catalyses the reaction [pyruvate, water dikinase] + ADP = [pyruvate, water dikinase]-phosphate + AMP + H(+). The enzyme catalyses [pyruvate, water dikinase]-phosphate + phosphate + H(+) = [pyruvate, water dikinase] + diphosphate. Functionally, bifunctional serine/threonine kinase and phosphorylase involved in the regulation of the phosphoenolpyruvate synthase (PEPS) by catalyzing its phosphorylation/dephosphorylation. The polypeptide is Putative phosphoenolpyruvate synthase regulatory protein (Xanthomonas campestris pv. campestris (strain ATCC 33913 / DSM 3586 / NCPPB 528 / LMG 568 / P 25)).